The primary structure comprises 119 residues: Large ribosomal subunit protein eL31z (119 aa).

The protein belongs to the eukaryotic ribosomal protein eL31 family.

In Arabidopsis thaliana (Mouse-ear cress), this protein is Large ribosomal subunit protein eL31z (RPL31A).